Consider the following 245-residue polypeptide: Small ribosomal subunit protein uS3 (245 aa).

Residues 38 to 106 form the KH type-2 domain; sequence IRKYLNTRLA…EVQINIFEIK (69 aa). Residues 225–245 form a disordered region; sequence YEGSGDKSVKRRKRNGIKKNE. Positions 233-245 are enriched in basic residues; it reads VKRRKRNGIKKNE.

The protein belongs to the universal ribosomal protein uS3 family. Part of the 30S ribosomal subunit. Forms a tight complex with proteins S10 and S14.

Its function is as follows. Binds the lower part of the 30S subunit head. Binds mRNA in the 70S ribosome, positioning it for translation. This Azobacteroides pseudotrichonymphae genomovar. CFP2 protein is Small ribosomal subunit protein uS3.